The primary structure comprises 388 residues: Dauer abnormal formation protein 25 (388 aa).

ANK repeat units lie at residues 40–69 (SGMS…DVND), 74–103 (TLYT…RMYL), and 107–137 (IGKT…DVIE). Zn(2+) is bound by residues Cys-321, Cys-324, Cys-333, Cys-336, Cys-341, Cys-345, His-353, and Cys-357. The segment at 321–357 (CSVCGHPGAKKRCTQCKLAYCSQECQKFDWPIHKKVC) adopts an MYND-type zinc-finger fold.

Expressed in many ciliated sensory neurons.

The protein resides in the cell projection. It localises to the cilium. In terms of biological role, may be involved in the trafficking and dendritic transport of signaling proteins, such as the receptor-type guanylate cyclases gcy-12 and daf-11, to the cilia. In ciliated sensory neurons, required for the calcium flux to the cytoplasm in response to onset and removal of a nitric oxide (NO) stimulus and is thereby required for the behavioral avoidance response to NO-producing organisms like P.aeruginosa. This chain is Dauer abnormal formation protein 25 (daf-25), found in Caenorhabditis elegans.